The chain runs to 789 residues: Polyribonucleotide nucleotidyltransferase (789 aa).

Mg(2+)-binding residues include aspartate 494 and aspartate 500. One can recognise a KH domain in the interval 561–620; the sequence is PRIESIFINKDKIRNVIGSGGKNIREICEKTGARVEIMQDGTVMIYAINNDAVEYAKNMI. The S1 motif domain maps to 630-697; sequence GKVFDGTVIE…DREYVQLSMR (68 aa). Positions 709-789 are disordered; that stretch reads GELYNIRKTN…NEVPRKPRFF (81 aa). The segment covering 737-749 has biased composition (basic residues); sequence SEKKRRGSGRSRR. The span at 763–780 shows a compositional bias: low complexity; that stretch reads NNGFGNGNRSFNDNRNGN.

This sequence belongs to the polyribonucleotide nucleotidyltransferase family. Requires Mg(2+) as cofactor.

It localises to the cytoplasm. It catalyses the reaction RNA(n+1) + phosphate = RNA(n) + a ribonucleoside 5'-diphosphate. Involved in mRNA degradation. Catalyzes the phosphorolysis of single-stranded polyribonucleotides processively in the 3'- to 5'-direction. This is Polyribonucleotide nucleotidyltransferase from Ehrlichia ruminantium (strain Welgevonden).